A 409-amino-acid chain; its full sequence is MTYPERPLLHLLTRTSLVGQIIVGLIAGLLLASFFPAAALKVGFIGKVFVSALKAVAPVLVFVLVMASIANHRQGQQTHIRPILLLYLVGTFSAAVVAVIASFAFPSSLVLASHPGEMSPPGGIAEVLQSLLLSVVDNPVNALISANFIGILAWAIGLGIAFRHASDTTRNLLSELSNGVSLIVKVVIRFAPLGIFGLVASTFAESGVEALKGYAHLLVVLLGCMLFVAFVVNPLIVFLKIRRNPYPLVLTCLRESGMTAFFTRSSAANIPVNLQLCERLGLHEDTYSVSIPLGATINMAGAAITITVLTLAAVHTLGIAVDVPTAILLSVVASICACGASGVAGGSLLLIPLACSLFGIPSEVAMQVVAVGFIIAILQDSAETALNSSTDVLFTAAACEAEERKASAA.

Helical transmembrane passes span 17–37 (LVGQ…FFPA), 49–69 (FVSA…MASI), 83–103 (ILLL…IASF), 142–162 (ALIS…GIAF), 180–200 (VSLI…GLVA), 218–238 (LVVL…LIVF), 301–321 (GAAI…GIAV), 331–351 (VVAS…LLLI), and 357–377 (LFGI…IIAI).

This sequence belongs to the dicarboxylate/amino acid:cation symporter (DAACS) (TC 2.A.23) family.

It is found in the cell inner membrane. The enzyme catalyses L-serine(in) + Na(+)(in) = L-serine(out) + Na(+)(out). It catalyses the reaction L-threonine(in) + Na(+)(in) = L-threonine(out) + Na(+)(out). In terms of biological role, involved in the import of serine and threonine into the cell, with the concomitant import of sodium (symport system). The sequence is that of Serine/threonine transporter SstT from Pseudomonas aeruginosa (strain LESB58).